A 500-amino-acid polypeptide reads, in one-letter code: Probable cytosol aminopeptidase (500 aa).

Residues Lys267 and Asp272 each coordinate Mn(2+). The active site involves Lys279. The Mn(2+) site is built by Asp290, Asp349, and Glu351. Arg353 is a catalytic residue.

This sequence belongs to the peptidase M17 family. Mn(2+) is required as a cofactor.

The protein resides in the cytoplasm. It carries out the reaction Release of an N-terminal amino acid, Xaa-|-Yaa-, in which Xaa is preferably Leu, but may be other amino acids including Pro although not Arg or Lys, and Yaa may be Pro. Amino acid amides and methyl esters are also readily hydrolyzed, but rates on arylamides are exceedingly low.. The catalysed reaction is Release of an N-terminal amino acid, preferentially leucine, but not glutamic or aspartic acids.. Its function is as follows. Presumably involved in the processing and regular turnover of intracellular proteins. Catalyzes the removal of unsubstituted N-terminal amino acids from various peptides. This is Probable cytosol aminopeptidase from Tolumonas auensis (strain DSM 9187 / NBRC 110442 / TA 4).